The chain runs to 66 residues: Large ribosomal subunit protein bL35 (66 aa).

The disordered stretch occupies residues 1–26 (MPKQKTHRGAAKRFKKTGSGKLKRSH).

It belongs to the bacterial ribosomal protein bL35 family.

The chain is Large ribosomal subunit protein bL35 from Bacillus anthracis.